A 92-amino-acid chain; its full sequence is YcgL domain-containing protein Shewmr7_2249 (92 aa).

In terms of domain architecture, YcgL spans 1–85 (MLCAVYKSSR…PQVNLLAEHR (85 aa)).

This Shewanella sp. (strain MR-7) protein is YcgL domain-containing protein Shewmr7_2249.